A 234-amino-acid polypeptide reads, in one-letter code: Demethylmenaquinone methyltransferase (234 aa).

S-adenosyl-L-methionine contacts are provided by residues Thr-58, Asp-79, and 104–105 (NA).

Belongs to the class I-like SAM-binding methyltransferase superfamily. MenG/UbiE family.

The catalysed reaction is a 2-demethylmenaquinol + S-adenosyl-L-methionine = a menaquinol + S-adenosyl-L-homocysteine + H(+). It functions in the pathway quinol/quinone metabolism; menaquinone biosynthesis; menaquinol from 1,4-dihydroxy-2-naphthoate: step 2/2. Its function is as follows. Methyltransferase required for the conversion of demethylmenaquinol (DMKH2) to menaquinol (MKH2). The chain is Demethylmenaquinone methyltransferase from Lysinibacillus sphaericus (strain C3-41).